The sequence spans 186 residues: Signal peptidase I P (186 aa).

Topologically, residues 1-15 (MTKEKVFKKKSSILE) are cytoplasmic. Residues 16–35 (WGKAIVIAVILALLIRNFLF) form a helical membrane-spanning segment. The Extracellular portion of the chain corresponds to 36–186 (EPYVVEGKSM…FPFSNMRKAK (151 aa)). Residues Ser-44 and Lys-86 contribute to the active site.

The protein belongs to the peptidase S26 family.

It is found in the cell membrane. The catalysed reaction is Cleavage of hydrophobic, N-terminal signal or leader sequences from secreted and periplasmic proteins.. The sequence is that of Signal peptidase I P (sipP) from Bacillus subtilis subsp. natto.